A 227-amino-acid chain; its full sequence is Phosphoribosylformylglycinamidine synthase subunit PurQ (227 aa).

The Glutamine amidotransferase type-1 domain maps to 3-227 (FAVIVFPGSN…NWRESHVTAS (225 aa)). Catalysis depends on cysteine 86, which acts as the Nucleophile. Active-site residues include histidine 194 and glutamate 196.

Part of the FGAM synthase complex composed of 1 PurL, 1 PurQ and 2 PurS subunits.

The protein localises to the cytoplasm. It catalyses the reaction N(2)-formyl-N(1)-(5-phospho-beta-D-ribosyl)glycinamide + L-glutamine + ATP + H2O = 2-formamido-N(1)-(5-O-phospho-beta-D-ribosyl)acetamidine + L-glutamate + ADP + phosphate + H(+). It carries out the reaction L-glutamine + H2O = L-glutamate + NH4(+). The protein operates within purine metabolism; IMP biosynthesis via de novo pathway; 5-amino-1-(5-phospho-D-ribosyl)imidazole from N(2)-formyl-N(1)-(5-phospho-D-ribosyl)glycinamide: step 1/2. Part of the phosphoribosylformylglycinamidine synthase complex involved in the purines biosynthetic pathway. Catalyzes the ATP-dependent conversion of formylglycinamide ribonucleotide (FGAR) and glutamine to yield formylglycinamidine ribonucleotide (FGAM) and glutamate. The FGAM synthase complex is composed of three subunits. PurQ produces an ammonia molecule by converting glutamine to glutamate. PurL transfers the ammonia molecule to FGAR to form FGAM in an ATP-dependent manner. PurS interacts with PurQ and PurL and is thought to assist in the transfer of the ammonia molecule from PurQ to PurL. This chain is Phosphoribosylformylglycinamidine synthase subunit PurQ, found in Shouchella clausii (strain KSM-K16) (Alkalihalobacillus clausii).